Here is a 149-residue protein sequence, read N- to C-terminus: UPF0178 protein VV1_1847 (149 aa).

The protein belongs to the UPF0178 family.

This chain is UPF0178 protein VV1_1847, found in Vibrio vulnificus (strain CMCP6).